A 2555-amino-acid chain; its full sequence is Plipastatin synthase subunit C (2555 aa).

The condensation 1 stretch occupies residues 7 to 306 (IQDIYPLSFM…NTIPIRAQSD (300 aa)). Positions 491–894 (TYAELDMYAS…SIEGVREAAV (404 aa)) are adenylation 1. A Carrier 1 domain is found at 967–1042 (APRNVTEMKL…GLATVIREGT (76 aa)). Serine 1002 is modified (O-(pantetheine 4'-phosphoryl)serine). Positions 1054–1344 (KQETYPVSSA…NTLALRTRPE (291 aa)) are condensation 2. Residues 1532–1927 (TYEDLNSWAN…QIDGVKEAAV (396 aa)) form an adenylation 2 region. A Carrier 2 domain is found at 2003-2077 (PPRNELEEQL…DLSPFIRKSE (75 aa)). At serine 2038 the chain carries O-(pantetheine 4'-phosphoryl)serine. Residues 2085-2548 (IQGDVPWTPV…SLTAEDLDSI (464 aa)) are epimerization 3.

This sequence belongs to the ATP-dependent AMP-binding enzyme family. Requires pantetheine 4'-phosphate as cofactor.

Its function is as follows. This protein is a multifunctional enzyme, able to activate and polymerize the amino acids Glu and Ala/Val as part of the biosynthesis of the lipopeptide antibiotic plipastatin. The Ala/Val residue is further epimerized to the D-isomer form. The activation sites for these amino acids consist of individual domains. The sequence is that of Plipastatin synthase subunit C (ppsC) from Bacillus subtilis (strain 168).